A 316-amino-acid chain; its full sequence is GMP reductase (316 aa).

Catalysis depends on Cys175, which acts as the Thioimidate intermediate. 202–225 (VIADGGIVEHGDIAKALVCGATMV) is a binding site for NADP(+).

Belongs to the IMPDH/GMPR family. GuaC type 2 subfamily.

It carries out the reaction IMP + NH4(+) + NADP(+) = GMP + NADPH + 2 H(+). Catalyzes the irreversible NADPH-dependent deamination of GMP to IMP. It functions in the conversion of nucleobase, nucleoside and nucleotide derivatives of G to A nucleotides, and in maintaining the intracellular balance of A and G nucleotides. This chain is GMP reductase, found in Chromobacterium violaceum (strain ATCC 12472 / DSM 30191 / JCM 1249 / CCUG 213 / NBRC 12614 / NCIMB 9131 / NCTC 9757 / MK).